A 1357-amino-acid chain; its full sequence is MAYSYTEKKRIRKDFSKLPDVMDVPYLLAIQLDSYREFLQAGATKDQFRDVGLHAAFKSVFPIISYSGNAALEYVGYRLGEPAFDVKECVLRGVTYAVPLRVKVRLIIFDKESSNKAIKDIKEQEVYMGEIPLMTENGTFVINGTERVIVSQLHRSPGVFFDHDRGKTHSSGKLLYSARIIPYRGSWLDFEFDPKDCVFVRIDRRRKLPASVLLRALGYTTEQVLDAFYTTNVFSLKDETLSLELIASRLRGEIAVLDIQDEKGKVIVEAGRRITARHINQIEKAGIKSLDVPLDYVLGRTTAKVIVHPATGEILAECNTELNTEILAKIAKAQVVRIETLYTNDIDCGPFISDTLKIDSTSNQLEALVEIYRMMRPGEPPTKDAAETLFNNLFFSPERYDLSAVGRMKFNRRIGRTEIEGSGVLCKEDIVAVLKTLVDIRNGKGIVDDIDHLGNRRVRCVGEMAENQFRVGLVRVERAVKERLSMAESEGLMPQDLINAKPVAAAVKEFFGSSQLSQFMDQNNPLSEITHKRRVSALGPGGLTRERAGFEVRDVHPTHYGRVCPIETPEGPNIGLINSLAAYARTNQYGFLESPYRVVKDALVTDEIVFLSAIEEADHVIAQASATMNDKKVLIDELVAVRHLNEFTVKAPEDVTLMDVSPKQVVSVAASLIPFLEHDDANRALMGSNMQRQAVPTLRADKPLVGTGMERNVARDSGVCVVARRGGVIDSVDASRIVVRVADDEVETGEAGVDIYNLTKYTRSNQNTCINQRPLVRKGDRVQRSDIMADGPSTDMGELALGQNMRIAFMAWNGFNFEDSICLSERVVQEDRFTTIHIQELTCVARDTKLGPEEITADIPNVGEAALNKLDEAGIVYVGAEVGAGDILVGKVTPKGETQLTPEEKLLRAIFGEKASDVKDTSLRVPTGTKGTVIDVQVFTRDGVERDARALSIEKTQLDEIRKDLNEEFRIVEGATFERLRSALVGHKAEGGAGLKKGQDITDEILDGLEHGQWFKLRMAEDALNEQLEKAQAYIVDRRRLLDDKFEDKKRKLQQGDDLAPGVLKIVKVYLAIRRRIQPGDKMAGRHGNKGVVSVIMPVEDMPHDANGTPVDVVLNPLGVPSRMNVGQILETHLGLAAKGLGEKINRMIEEQRKVADLRKFLHEIYNEIGGRKEELDTFSDQEILDLAKNLRGGVPMATPVFDGAKESEIKAMLKLADLPESGQMQLFDGRTGNKFERPVTVGYMYMLKLNHLVDDKMHARSTGSYSLVTQQPLGGKAQFGGQRFGEMEVWALEAYGAAYTLQEMLTVKSDDVNGRTKMYKNIVDGDHRMEPGMPESFNVLIKEIRSLGIDIDLETE.

It belongs to the RNA polymerase beta chain family. As to quaternary structure, the RNAP catalytic core consists of 2 alpha, 1 beta, 1 beta' and 1 omega subunit. When a sigma factor is associated with the core the holoenzyme is formed, which can initiate transcription.

It catalyses the reaction RNA(n) + a ribonucleoside 5'-triphosphate = RNA(n+1) + diphosphate. In terms of biological role, DNA-dependent RNA polymerase catalyzes the transcription of DNA into RNA using the four ribonucleoside triphosphates as substrates. In Pseudomonas fluorescens (strain SBW25), this protein is DNA-directed RNA polymerase subunit beta.